A 1287-amino-acid chain; its full sequence is SCL-interrupting locus protein (1287 aa).

Met1 is subject to N-acetylmethionine. Residues 1-1018 (MEPIYPFARP…IDSPTKVKKN (1018 aa)) are interaction with RBM14. The interaction with CPAP stretch occupies residues 231-781 (YKYGYLTMDE…VSVEAQSSPG (551 aa)). Disordered regions lie at residues 378–417 (RSSQ…SQKI) and 508–533 (PPAY…PSHD). The residue at position 395 (Ser395) is a Phosphoserine. Residues 517–529 (HTRNSIKPSSHNG) are compositionally biased toward polar residues. Positions 584–779 (PMELQIPTPP…ELVSVEAQSS (196 aa)) are PIN1-binding. Phosphoserine occurs at positions 753, 779, and 1135.

In terms of assembly, homodimer. Interacts with PIN1 via its WW domain. This interaction is dependent on STIL mitotic phosphorylation. Interacts with CPAP. Interacts with RBM14 and this interaction interferes with the interaction of STIL with CPAP. Forms a complex with CPAP and SASS6. Interacts (via N-terminus) with CEP85; this interaction is essential for efficient centriolar targeting of STIL and subsequent PLK4 activation. Ubiquitinated. In terms of processing, phosphorylated following the activation of the mitotic checkpoint. In terms of tissue distribution, expressed in all hematopoietic tissues and cell lines. Highly expressed in a variety of tumors characterized by increased mitotic activity with highest expression in lung cancer.

It localises to the cytoplasm. The protein resides in the cytosol. The protein localises to the cytoskeleton. It is found in the microtubule organizing center. Its subcellular location is the centrosome. It localises to the centriole. The protein resides in the cell cortex. Immediate-early gene. Plays an important role in embryonic development as well as in cellular growth and proliferation; its long-term silencing affects cell survival and cell cycle distribution as well as decreases CDK1 activity correlated with reduced phosphorylation of CDK1. Plays a role as a positive regulator of the sonic hedgehog pathway, acting downstream of PTCH1. Plays an important role in the regulation of centriole duplication. Required for the onset of procentriole formation and proper mitotic progression. During procentriole formation, is essential for the correct loading of SASS6 and CPAP to the base of the procentriole to initiate procentriole assembly. In complex with STIL acts as a modulator of PLK4-driven cytoskeletal rearrangements and directional cell motility. The protein is SCL-interrupting locus protein (STIL) of Homo sapiens (Human).